Reading from the N-terminus, the 492-residue chain is MQEAPAALPTEPGPSPVPAFLGKLWALVGDPGTDHLIRWSPSGTSFLVSDQSRFAKEVLPQYFKHSNMASFVRQLNMYGFRKVVSIEQGGLLRPERDHVEFQHPSFVRGREQLLERVRRKVPALRGDDSRWRPEDLSRLLGEVQALRGVQESTEARLQELRQQNEILWREVVTLRQSHSQQHRVIGKLIQCLFGPLQTGPSSTGAKRKLSLMLDEGSACSASAKFNACPVSGALLQDPYFIQSPLPETTLGLSPHRARGPIISDIPEDSPSPEGHRLSPSGGCRRVKGLALLKEEPASPGGDGEAGLALAPNECDFCVTAPPPLPVAVVQAILEGKGSYSPEGPRSVQQPEPRGPREVPDRGTLGLDRGNRSPESLLPPMLLRPAPETLEPVAPVDVLGPSLHGREWTLMDLDMELSLMQPLAPETDEAELTVKELNSSGVGKDHTLGTPLMLDVQADLEGAALSVPGALTLYNVTESNASYLDPGASPSSP.

Residues 17–122 mediate DNA binding; that stretch reads VPAFLGKLWA…LLERVRRKVP (106 aa). The hydrophobic repeat HR-A/B stretch occupies residues 129–203; the sequence is SRWRPEDLSR…GPLQTGPSST (75 aa). Positions 245–322 are interactions with DUSP26, MAPK1 and MAPK2; sequence LPETTLGLSP…ECDFCVTAPP (78 aa). Residues 263 to 282 form a disordered region; that stretch reads SDIPEDSPSPEGHRLSPSGG. Residue Lys293 forms a Glycyl lysine isopeptide (Lys-Gly) (interchain with G-Cter in SUMO) linkage. Ser298 is modified (phosphoserine). Residues 337–378 form a disordered region; sequence GSYSPEGPRSVQQPEPRGPREVPDRGTLGLDRGNRSPESLLP. The hydrophobic repeat HR-C stretch occupies residues 364–389; the sequence is LGLDRGNRSPESLLPPMLLRPAPETL.

Belongs to the HSF family. As to quaternary structure, homotrimer. Exhibits constitutive DNA binding and forms trimers even in the absence of stress. Interacts with ALKBH4, DUSP26, MAPK1, MAPK2, MAPK8 and MAP kinase p38. Phosphorylated mainly on serine residues. Phosphorylation on Ser-298 promotes sumoylation on Lys-293. In terms of processing, isoform HSF4B is constitutively sumoylated. Sumoylation represses the transcriptional activity and is promoted by phosphorylation on Ser-298. HSFA is not sumoylated. In terms of tissue distribution, preferentially expressed in brain and lung. Also found in the eye. Slightly detected in liver and skeletal muscle. Isoform B is the major species in various tissues.

It localises to the nucleus. Functionally, heat-shock transcription factor that specifically binds heat shock promoter elements (HSE). Required for denucleation and organelle rupture and degradation that occur during eye lens terminal differentiation, when fiber cells that compose the lens degrade all membrane-bound organelles in order to provide lens with transparency to allow the passage of light. In this process, may regulate denucleation of lens fiber cells in part by activating DNASE2B transcription. May be involved in DNA repair through the transcriptional regulation of RAD51. May up-regulate p53/TP53 protein in eye lens fiber cells, possibly through protein stabilization. In the eye lens, controls the expression of alpha-crystallin B chain/CRYAB and consequently may be involved in the regulation of lysosomal acidification. Transcriptional repressor. Its function is as follows. Transcriptional activator. This chain is Heat shock factor protein 4 (Hsf4), found in Mus musculus (Mouse).